The sequence spans 112 residues: Nitrogen regulatory protein P-II (112 aa).

An O-UMP-tyrosine modification is found at tyrosine 51.

Belongs to the P(II) protein family. As to quaternary structure, homotrimer.

The protein resides in the plastid. It is found in the chloroplast. P-II indirectly controls the transcription of the glutamine synthetase gene (glnA). P-II prevents NR-II-catalyzed conversion of NR-I to NR-I-phosphate, the transcriptional activator of glnA. When P-II is uridylylated to P-II-UMP, these events are reversed. When the ratio of Gln to 2-ketoglutarate decreases, P-II is uridylylated to P-II-UMP, which causes the deadenylation of glutamine synthetase, so activating the enzyme. The polypeptide is Nitrogen regulatory protein P-II (glnB) (Porphyra purpurea (Red seaweed)).